Here is a 269-residue protein sequence, read N- to C-terminus: GTP cyclohydrolase FolE2 (269 aa).

The protein belongs to the GTP cyclohydrolase IV family.

It carries out the reaction GTP + H2O = 7,8-dihydroneopterin 3'-triphosphate + formate + H(+). It participates in cofactor biosynthesis; 7,8-dihydroneopterin triphosphate biosynthesis; 7,8-dihydroneopterin triphosphate from GTP: step 1/1. Functionally, converts GTP to 7,8-dihydroneopterin triphosphate. The sequence is that of GTP cyclohydrolase FolE2 from Azoarcus sp. (strain BH72).